A 494-amino-acid chain; its full sequence is Cytochrome P450 2A8 (494 aa).

Residue Cys-439 coordinates heme.

It belongs to the cytochrome P450 family. Requires heme as cofactor. Liver.

It is found in the endoplasmic reticulum membrane. The protein localises to the microsome membrane. The catalysed reaction is an organic molecule + reduced [NADPH--hemoprotein reductase] + O2 = an alcohol + oxidized [NADPH--hemoprotein reductase] + H2O + H(+). Highly active in 7-ethoxycoumarin O-deethylation, and benzphetamine N-demethylation; moderately active in testosterone 7-alpha-hydroxylation, ethylmorphine N-demethylation, p-nitroanisole O-demethylation; and only slightly active in benzopyrene 3-hydroxylation, 7-ethoxyresorufin O-deethylation, testosterone 2-alpha-hydroxylation and testosterone 17-oxidation. Competent in the metabolic activation of aflatoxin B1. The polypeptide is Cytochrome P450 2A8 (CYP2A8) (Mesocricetus auratus (Golden hamster)).